The sequence spans 1407 residues: DNA-directed RNA polymerase subunit beta' (1407 aa).

Residues cysteine 70, cysteine 72, cysteine 85, and cysteine 88 each contribute to the Zn(2+) site. Residues aspartate 460, aspartate 462, and aspartate 464 each contribute to the Mg(2+) site. Zn(2+) contacts are provided by cysteine 814, cysteine 888, cysteine 895, and cysteine 898. Lysine 972 carries the post-translational modification N6-acetyllysine.

Belongs to the RNA polymerase beta' chain family. As to quaternary structure, the RNAP catalytic core consists of 2 alpha, 1 beta, 1 beta' and 1 omega subunit. When a sigma factor is associated with the core the holoenzyme is formed, which can initiate transcription. It depends on Mg(2+) as a cofactor. Requires Zn(2+) as cofactor.

The catalysed reaction is RNA(n) + a ribonucleoside 5'-triphosphate = RNA(n+1) + diphosphate. DNA-dependent RNA polymerase catalyzes the transcription of DNA into RNA using the four ribonucleoside triphosphates as substrates. In Escherichia coli O1:K1 / APEC, this protein is DNA-directed RNA polymerase subunit beta'.